We begin with the raw amino-acid sequence, 343 residues long: Programmed cell death protein 2 (343 aa).

Zn(2+)-binding residues include C134, C137, C145, C148, C154, H158, H167, and C171. The MYND-type; atypical zinc finger occupies 134–171 (CRVCGCLAPMTCSRCKQAHYCSKEHQTLDWRLGHKQAC).

Ubiquitinated by PRKN, promoting proteasomal degradation.

Its subcellular location is the nucleus. In terms of biological role, may be a DNA-binding protein with a regulatory function. May play an important role in cell death and/or in regulation of cell proliferation. The polypeptide is Programmed cell death protein 2 (Pdcd2) (Mus musculus (Mouse)).